The chain runs to 132 residues: Extracellular small neutral protease (132 aa).

Residues D76 and T78 each coordinate Ca(2+). H83 is a Zn(2+) binding site. Residue E84 is part of the active site. H87 and D93 together coordinate Zn(2+). C99 and C112 are disulfide-bonded.

The protein belongs to the peptidase M7 family. Ca(2+) serves as cofactor. Zn(2+) is required as a cofactor.

Its subcellular location is the secreted. The catalysed reaction is Hydrolyzes proteins with a preference for Tyr or Phe in the P1' position. Has no action on amino-acid p-nitroanilides.. In terms of biological role, specifically hydrolyzes the peptide bond at the imino side of aromatic residues. This Streptomyces caespitosus protein is Extracellular small neutral protease (snpA).